Here is a 417-residue protein sequence, read N- to C-terminus: NADH-quinone oxidoreductase subunit D (417 aa).

The protein belongs to the complex I 49 kDa subunit family. In terms of assembly, NDH-1 is composed of 14 different subunits. Subunits NuoB, C, D, E, F, and G constitute the peripheral sector of the complex.

The protein localises to the cell inner membrane. The catalysed reaction is a quinone + NADH + 5 H(+)(in) = a quinol + NAD(+) + 4 H(+)(out). Its function is as follows. NDH-1 shuttles electrons from NADH, via FMN and iron-sulfur (Fe-S) centers, to quinones in the respiratory chain. The immediate electron acceptor for the enzyme in this species is believed to be ubiquinone. Couples the redox reaction to proton translocation (for every two electrons transferred, four hydrogen ions are translocated across the cytoplasmic membrane), and thus conserves the redox energy in a proton gradient. The protein is NADH-quinone oxidoreductase subunit D of Cupriavidus taiwanensis (strain DSM 17343 / BCRC 17206 / CCUG 44338 / CIP 107171 / LMG 19424 / R1) (Ralstonia taiwanensis (strain LMG 19424)).